Reading from the N-terminus, the 181-residue chain is Protein Syd (181 aa).

This sequence belongs to the Syd family.

It localises to the cell inner membrane. Interacts with the SecY protein in vivo. May bind preferentially to an uncomplexed state of SecY, thus functioning either as a chelating agent for excess SecY in the cell or as a regulatory factor that negatively controls the translocase function. The polypeptide is Protein Syd (Klebsiella pneumoniae subsp. pneumoniae (strain ATCC 700721 / MGH 78578)).